The sequence spans 229 residues: Urease accessory protein UreF (229 aa).

This sequence belongs to the UreF family. UreD, UreF and UreG form a complex that acts as a GTP-hydrolysis-dependent molecular chaperone, activating the urease apoprotein by helping to assemble the nickel containing metallocenter of UreC. The UreE protein probably delivers the nickel.

Its subcellular location is the cytoplasm. Its function is as follows. Required for maturation of urease via the functional incorporation of the urease nickel metallocenter. In Corynebacterium efficiens (strain DSM 44549 / YS-314 / AJ 12310 / JCM 11189 / NBRC 100395), this protein is Urease accessory protein UreF.